A 103-amino-acid polypeptide reads, in one-letter code: Co-chaperonin GroES (103 aa).

The protein belongs to the GroES chaperonin family. As to quaternary structure, heptamer of 7 subunits arranged in a ring. Interacts with the chaperonin GroEL.

It is found in the cytoplasm. In terms of biological role, together with the chaperonin GroEL, plays an essential role in assisting protein folding. The GroEL-GroES system forms a nano-cage that allows encapsulation of the non-native substrate proteins and provides a physical environment optimized to promote and accelerate protein folding. GroES binds to the apical surface of the GroEL ring, thereby capping the opening of the GroEL channel. This chain is Co-chaperonin GroES, found in Picosynechococcus sp. (strain ATCC 27264 / PCC 7002 / PR-6) (Agmenellum quadruplicatum).